The following is a 389-amino-acid chain: Succinate--CoA ligase [ADP-forming] subunit beta (389 aa).

One can recognise an ATP-grasp domain in the interval 9 to 244; it reads KQLFEHYGLP…LTQNDAREAE (236 aa). ATP is bound by residues lysine 46, 53 to 55, glutamate 99, cysteine 102, and glutamate 107; that span reads GRG. Residues asparagine 199 and aspartate 213 each coordinate Mg(2+). Substrate contacts are provided by residues asparagine 264 and 321–323; that span reads GIV.

This sequence belongs to the succinate/malate CoA ligase beta subunit family. In terms of assembly, heterotetramer of two alpha and two beta subunits. Mg(2+) serves as cofactor.

It catalyses the reaction succinate + ATP + CoA = succinyl-CoA + ADP + phosphate. The enzyme catalyses GTP + succinate + CoA = succinyl-CoA + GDP + phosphate. It participates in carbohydrate metabolism; tricarboxylic acid cycle; succinate from succinyl-CoA (ligase route): step 1/1. In terms of biological role, succinyl-CoA synthetase functions in the citric acid cycle (TCA), coupling the hydrolysis of succinyl-CoA to the synthesis of either ATP or GTP and thus represents the only step of substrate-level phosphorylation in the TCA. The beta subunit provides nucleotide specificity of the enzyme and binds the substrate succinate, while the binding sites for coenzyme A and phosphate are found in the alpha subunit. This is Succinate--CoA ligase [ADP-forming] subunit beta from Haemophilus influenzae (strain ATCC 51907 / DSM 11121 / KW20 / Rd).